The sequence spans 107 residues: MKDLMGLMKQAQAMQQKMTEAQARLAETEVTGEAGAGLVRVVLTAKGDMVSIHVDKSLMDPDEPEILEDLLKAAHADARRKGEEAQQDIMKDAAGGLQLPPGMQMPF.

It belongs to the YbaB/EbfC family. In terms of assembly, homodimer.

It is found in the cytoplasm. The protein localises to the nucleoid. Functionally, binds to DNA and alters its conformation. May be involved in regulation of gene expression, nucleoid organization and DNA protection. The protein is Nucleoid-associated protein Mmar10_0436 of Maricaulis maris (strain MCS10) (Caulobacter maris).